The following is a 185-amino-acid chain: Ribosome-recycling factor (185 aa).

The protein belongs to the RRF family.

It is found in the cytoplasm. Its function is as follows. Responsible for the release of ribosomes from messenger RNA at the termination of protein biosynthesis. May increase the efficiency of translation by recycling ribosomes from one round of translation to another. The protein is Ribosome-recycling factor of Glaesserella parasuis serovar 5 (strain SH0165) (Haemophilus parasuis).